Reading from the N-terminus, the 61-residue chain is Putative defensin-like protein 72 (61 aa).

4 cysteine pairs are disulfide-bonded: Cys-21/Cys-59, Cys-25/Cys-48, Cys-34/Cys-57, and Cys-38/Cys-58.

Belongs to the DEFL family.

This chain is Putative defensin-like protein 72, found in Arabidopsis thaliana (Mouse-ear cress).